Here is a 949-residue protein sequence, read N- to C-terminus: Isoleucine--tRNA ligase (949 aa).

The short motif at 58 to 68 (PYANGDIHIGH) is the 'HIGH' region element. Residue Glu-567 participates in L-isoleucyl-5'-AMP binding. The 'KMSKS' region motif lies at 608–612 (KMSKS). Position 611 (Lys-611) interacts with ATP. Zn(2+) contacts are provided by Cys-912, Cys-915, Cys-932, and Cys-935.

The protein belongs to the class-I aminoacyl-tRNA synthetase family. IleS type 1 subfamily. Monomer. The cofactor is Zn(2+).

The protein localises to the cytoplasm. It carries out the reaction tRNA(Ile) + L-isoleucine + ATP = L-isoleucyl-tRNA(Ile) + AMP + diphosphate. Functionally, catalyzes the attachment of isoleucine to tRNA(Ile). As IleRS can inadvertently accommodate and process structurally similar amino acids such as valine, to avoid such errors it has two additional distinct tRNA(Ile)-dependent editing activities. One activity is designated as 'pretransfer' editing and involves the hydrolysis of activated Val-AMP. The other activity is designated 'posttransfer' editing and involves deacylation of mischarged Val-tRNA(Ile). The protein is Isoleucine--tRNA ligase of Vibrio cholerae serotype O1 (strain ATCC 39541 / Classical Ogawa 395 / O395).